A 390-amino-acid chain; its full sequence is 8-amino-7-oxononanoate synthase (390 aa).

Arg-22 contributes to the substrate binding site. 109-110 serves as a coordination point for pyridoxal 5'-phosphate; the sequence is GY. His-134 lines the substrate pocket. Pyridoxal 5'-phosphate is bound by residues Ser-180, His-208, and Thr-236. At Lys-239 the chain carries N6-(pyridoxal phosphate)lysine. Thr-353 contributes to the substrate binding site.

The protein belongs to the class-II pyridoxal-phosphate-dependent aminotransferase family. BioF subfamily. In terms of assembly, homodimer. It depends on pyridoxal 5'-phosphate as a cofactor.

The enzyme catalyses 6-carboxyhexanoyl-[ACP] + L-alanine + H(+) = (8S)-8-amino-7-oxononanoate + holo-[ACP] + CO2. It functions in the pathway cofactor biosynthesis; biotin biosynthesis. In terms of biological role, catalyzes the decarboxylative condensation of pimeloyl-[acyl-carrier protein] and L-alanine to produce 8-amino-7-oxononanoate (AON), [acyl-carrier protein], and carbon dioxide. This is 8-amino-7-oxononanoate synthase from Azoarcus sp. (strain BH72).